Reading from the N-terminus, the 340-residue chain is UDP-glucose 4-epimerase (340 aa).

NAD(+) is bound by residues 16–17 (YI), 37–42 (IDNNKN), 60–61 (DL), 82–86 (FAAKT), S127, Y154, K158, and F182. 2 residues coordinate substrate: S127 and Y154. Y154 (proton acceptor) is an active-site residue. Substrate-binding positions include N183, 199 to 200 (TL), 216 to 218 (FLY), R231, and 295 to 298 (RSWD).

The protein belongs to the NAD(P)-dependent epimerase/dehydratase family. In terms of assembly, homodimer. NAD(+) is required as a cofactor.

It carries out the reaction UDP-alpha-D-glucose = UDP-alpha-D-galactose. The protein operates within carbohydrate metabolism; galactose metabolism. Involved in the metabolism of galactose. Catalyzes the conversion of UDP-galactose (UDP-Gal) to UDP-glucose (UDP-Glc) through a mechanism involving the transient reduction of NAD. This is UDP-glucose 4-epimerase (galE) from Mycoplasma genitalium (strain ATCC 33530 / DSM 19775 / NCTC 10195 / G37) (Mycoplasmoides genitalium).